A 300-amino-acid polypeptide reads, in one-letter code: 4-hydroxy-tetrahydrodipicolinate synthase (300 aa).

Residue threonine 56 coordinates pyruvate. The Proton donor/acceptor role is filled by tyrosine 145. Residue lysine 173 is the Schiff-base intermediate with substrate of the active site. Valine 215 contributes to the pyruvate binding site.

It belongs to the DapA family. As to quaternary structure, homotetramer; dimer of dimers.

The protein localises to the cytoplasm. The catalysed reaction is L-aspartate 4-semialdehyde + pyruvate = (2S,4S)-4-hydroxy-2,3,4,5-tetrahydrodipicolinate + H2O + H(+). The protein operates within amino-acid biosynthesis; L-lysine biosynthesis via DAP pathway; (S)-tetrahydrodipicolinate from L-aspartate: step 3/4. In terms of biological role, catalyzes the condensation of (S)-aspartate-beta-semialdehyde [(S)-ASA] and pyruvate to 4-hydroxy-tetrahydrodipicolinate (HTPA). This Prochlorococcus marinus (strain AS9601) protein is 4-hydroxy-tetrahydrodipicolinate synthase.